The primary structure comprises 203 residues: Small ribosomal subunit protein uS4 (203 aa).

The 81-residue stretch at 93–173 (RRFDNVVFRS…IPSWIQVDKA (81 aa)) folds into the S4 RNA-binding domain.

The protein belongs to the universal ribosomal protein uS4 family. As to quaternary structure, part of the 30S ribosomal subunit. Contacts protein S5. The interaction surface between S4 and S5 is involved in control of translational fidelity.

Functionally, one of the primary rRNA binding proteins, it binds directly to 16S rRNA where it nucleates assembly of the body of the 30S subunit. Its function is as follows. With S5 and S12 plays an important role in translational accuracy. The chain is Small ribosomal subunit protein uS4 from Chlorobium phaeobacteroides (strain DSM 266 / SMG 266 / 2430).